The sequence spans 103 residues: Toxin BMLCL (103 aa).

The signal sequence occupies residues 1–21 (MKTLLLTLVVVTIICLDLGYT). 5 disulfide bridges follow: Cys24/Cys45, Cys27/Cys37, Cys38/Cys72, Cys76/Cys90, and Cys91/Cys96.

It belongs to the three-finger toxin family. Ancestral subfamily. Orphan group XVII sub-subfamily. As to expression, expressed by the venom gland.

It is found in the secreted. In terms of biological role, interacts with high efficiency with both neuronal alpha-7/CHRNA7 and muscle type nicotinic acetylcholine receptors (nAChRs). Tested on human alpha-7/CHRNA7 nAChR (IC(50)=42 nM), T.californica muscle receptor (IC(50)=31 nM), L.stagnalis and A.californica acetylcholine-binding proteins (IC(50)=333 nM and 3.4 uM, respectively). The protein is Toxin BMLCL of Bungarus multicinctus (Many-banded krait).